A 590-amino-acid chain; its full sequence is Bacillolysin (590 aa).

Residues 1-24 (MKKVWFSLLGGAMLLGSVASGASA) form the signal peptide. The propeptide at 25-286 (ESSVSGPAQL…GSIVFQYDII (262 aa)) is activation peptide. 3 residues coordinate Ca(2+): Asp-339, Asp-341, and Asp-419. Residue His-423 participates in Zn(2+) binding. Glu-424 is an active-site residue. Residues His-427 and Glu-447 each contribute to the Zn(2+) site. The Ca(2+) site is built by Asp-466, Tyr-469, Thr-470, Ile-473, and Asp-476. His-507 (proton donor) is an active-site residue.

This sequence belongs to the peptidase M4 family. Ca(2+) is required as a cofactor. Zn(2+) serves as cofactor.

It localises to the secreted. The catalysed reaction is Similar, but not identical, to that of thermolysin.. Its function is as follows. Involved in the generation of beta- and alpha-amylases from the large amylase precursor. This is Bacillolysin (npr) from Paenibacillus polymyxa (Bacillus polymyxa).